We begin with the raw amino-acid sequence, 338 residues long: Lipoate-protein ligase A (338 aa).

A BPL/LPL catalytic domain is found at 29–216 (PATQRVLFLW…AFFAHYGERV (188 aa)). ATP is bound by residues Arg-71, 76 to 79 (GAVF), and Lys-134. Residue Lys-134 coordinates (R)-lipoate.

It belongs to the LplA family. In terms of assembly, monomer.

It is found in the cytoplasm. The catalysed reaction is L-lysyl-[lipoyl-carrier protein] + (R)-lipoate + ATP = N(6)-[(R)-lipoyl]-L-lysyl-[lipoyl-carrier protein] + AMP + diphosphate + H(+). It functions in the pathway protein modification; protein lipoylation via exogenous pathway; protein N(6)-(lipoyl)lysine from lipoate: step 1/2. Its pathway is protein modification; protein lipoylation via exogenous pathway; protein N(6)-(lipoyl)lysine from lipoate: step 2/2. In terms of biological role, catalyzes both the ATP-dependent activation of exogenously supplied lipoate to lipoyl-AMP and the transfer of the activated lipoyl onto the lipoyl domains of lipoate-dependent enzymes. The protein is Lipoate-protein ligase A of Shigella dysenteriae serotype 1 (strain Sd197).